Consider the following 215-residue polypeptide: Ribosomal RNA small subunit methyltransferase G (215 aa).

S-adenosyl-L-methionine contacts are provided by residues G82, M87, 133–134 (VE), and R148.

The protein belongs to the methyltransferase superfamily. RNA methyltransferase RsmG family.

It is found in the cytoplasm. The catalysed reaction is guanosine(527) in 16S rRNA + S-adenosyl-L-methionine = N(7)-methylguanosine(527) in 16S rRNA + S-adenosyl-L-homocysteine. Its function is as follows. Specifically methylates the N7 position of guanine in position 527 of 16S rRNA. This is Ribosomal RNA small subunit methyltransferase G from Stutzerimonas stutzeri (strain A1501) (Pseudomonas stutzeri).